Here is a 310-residue protein sequence, read N- to C-terminus: Bacteriochlorophyll synthase 34 kDa chain (310 aa).

Residues 1-13 (MSDMSDQTRLSSP) are compositionally biased toward polar residues. Residues 1–20 (MSDMSDQTRLSSPPSLPLHK) are disordered. Helical transmembrane passes span 39 to 59 (VTWF…GALG), 67 to 87 (LLLG…VVND), 112 to 132 (HVYI…LFLG), 134 to 154 (QVAF…LRPI), 166 to 186 (LVAI…FAPL), 187 to 207 (TGES…IMTV), 248 to 268 (VIGL…AILL), and 287 to 307 (VFFN…AAIG).

The protein localises to the cell membrane. The protein operates within porphyrin-containing compound metabolism; bacteriochlorophyll biosynthesis (light-independent). Functionally, catalyzes the esterification of bacteriochlorophyllide a by geranylgeraniol-PPi. The chain is Bacteriochlorophyll synthase 34 kDa chain (bchG) from Chloroflexus aurantiacus (strain ATCC 29366 / DSM 635 / J-10-fl).